Consider the following 178-residue polypeptide: NADH-ubiquinone oxidoreductase chain 6 (178 aa).

5 consecutive transmembrane segments (helical) span residues 1-21, 25-45, 48-68, 89-109, and 152-172; these read MMTY…VGFS, SPIY…GIVL, GGSF…LVVF, VLLT…YLLL, and YGYW…IVVM.

It belongs to the complex I subunit 6 family.

It localises to the mitochondrion membrane. It catalyses the reaction a ubiquinone + NADH + 5 H(+)(in) = a ubiquinol + NAD(+) + 4 H(+)(out). Its function is as follows. Core subunit of the mitochondrial membrane respiratory chain NADH dehydrogenase (Complex I) that is believed to belong to the minimal assembly required for catalysis. Complex I functions in the transfer of electrons from NADH to the respiratory chain. The immediate electron acceptor for the enzyme is believed to be ubiquinone. This is NADH-ubiquinone oxidoreductase chain 6 (MT-ND6) from Pseudosoriculus fumidus (Taiwanese brown-toothed shrew).